Reading from the N-terminus, the 93-residue chain is Small ribosomal subunit protein uS19 (93 aa).

Belongs to the universal ribosomal protein uS19 family.

Its function is as follows. Protein S19 forms a complex with S13 that binds strongly to the 16S ribosomal RNA. The chain is Small ribosomal subunit protein uS19 from Arthrobacter sp. (strain FB24).